Here is a 201-residue protein sequence, read N- to C-terminus: 3-isopropylmalate dehydratase small subunit (201 aa).

The protein belongs to the LeuD family. LeuD type 1 subfamily. Heterodimer of LeuC and LeuD.

It carries out the reaction (2R,3S)-3-isopropylmalate = (2S)-2-isopropylmalate. It functions in the pathway amino-acid biosynthesis; L-leucine biosynthesis; L-leucine from 3-methyl-2-oxobutanoate: step 2/4. Catalyzes the isomerization between 2-isopropylmalate and 3-isopropylmalate, via the formation of 2-isopropylmaleate. This is 3-isopropylmalate dehydratase small subunit from Escherichia fergusonii (strain ATCC 35469 / DSM 13698 / CCUG 18766 / IAM 14443 / JCM 21226 / LMG 7866 / NBRC 102419 / NCTC 12128 / CDC 0568-73).